A 403-amino-acid polypeptide reads, in one-letter code: F-box/kelch-repeat protein At5g43190 (403 aa).

The F-box domain maps to 45–91 (PNIWSNLPNHLLEHILSLLPFKTLLTLRSISRHLRSLILSPSFISDH). 4 Kelch repeats span residues 91–140 (HSFS…LLSS), 192–240 (KIFT…VFYN), 291–339 (ILYM…VCYH), and 343–393 (HVYC…FRWF).

This Arabidopsis thaliana (Mouse-ear cress) protein is F-box/kelch-repeat protein At5g43190.